We begin with the raw amino-acid sequence, 544 residues long: Chaperonin GroEL 1 (544 aa).

Residues Thr30–Pro33, Asp87–Thr91, Gly415, Asn480–Ala482, and Asp496 contribute to the ATP site.

The protein belongs to the chaperonin (HSP60) family. In terms of assembly, forms a cylinder of 14 subunits composed of two heptameric rings stacked back-to-back. Interacts with the co-chaperonin GroES.

The protein localises to the cytoplasm. The enzyme catalyses ATP + H2O + a folded polypeptide = ADP + phosphate + an unfolded polypeptide.. Functionally, together with its co-chaperonin GroES, plays an essential role in assisting protein folding. The GroEL-GroES system forms a nano-cage that allows encapsulation of the non-native substrate proteins and provides a physical environment optimized to promote and accelerate protein folding. The sequence is that of Chaperonin GroEL 1 from Polaromonas naphthalenivorans (strain CJ2).